A 321-amino-acid chain; its full sequence is Corticotropin-releasing factor-binding protein (321 aa).

The first 21 residues, 1–21 (MTPASRPDWCLILLFLAVLRG), serve as a signal peptide directing secretion. Intrachain disulfides connect C59/C80, C103/C140, C182/C204, C237/C264, and C277/C317. N-linked (GlcNAc...) asparagine glycosylation occurs at N203.

It belongs to the CRF-binding protein family.

It is found in the secreted. In terms of biological role, binds CRF and inactivates it. May prevent inappropriate pituitary-adrenal stimulation in pregnancy. The polypeptide is Corticotropin-releasing factor-binding protein (crhbp) (Xenopus laevis (African clawed frog)).